Reading from the N-terminus, the 972-residue chain is Peptidyl-glycine alpha-amidating monooxygenase (972 aa).

The first 20 residues, 1-20 (MAGFRSLLVLLLVFPSGCVG), serve as a signal peptide directing secretion. The interval 1–494 (MAGFRSLLVL…EGTWEPEHTG (494 aa)) is peptidylglycine alpha-hydroxylating monooxygenase. Positions 21-30 (FRSPLSVFKR) are excised as a propeptide. The Intragranular portion of the chain corresponds to 31–873 (FKETTRSFSN…VPAVLITTLL (843 aa)). Cystine bridges form between Cys-42–Cys-181, Cys-76–Cys-121, Cys-109–Cys-126, Cys-222–Cys-329, and Cys-288–Cys-310. 2 residues coordinate Cu(2+): His-102 and His-103. Cu(2+) contacts are provided by His-167, His-237, His-239, and Met-309. The segment at 495–817 (DFHVEEALDW…STEKMEHRSV (323 aa)) is peptidyl-alpha-hydroxyglycine alpha-amidating lyase. NHL repeat units lie at residues 498–541 (VEEA…NSFD), 567–608 (AAVL…LDPK), 617–662 (LGRS…FSPS), and 670–714 (GEAS…FKTD). Residue Val-517 coordinates Ca(2+). Residue Arg-530 participates in a protein binding. Residue His-582 coordinates Zn(2+). Residue Leu-584 participates in Ca(2+) binding. A disulfide bridge connects residues Cys-631 and Cys-652. Residue Tyr-651 participates in a protein binding. His-687 contacts Zn(2+). A disulfide bridge links Cys-699 with Cys-710. Arg-703 is a binding site for a protein. N-linked (GlcNAc...) asparagine glycosylation occurs at Asn-762. One copy of the NHL 5 repeat lies at 766–809 (GEIIDVFKPVRKHFDMPHDIAASEDGTVYVGDAHTNTVWKFTST). His-783 provides a ligand contact to Zn(2+). Asp-784 lines the Ca(2+) pocket. The chain crosses the membrane as a helical span at residues 874 to 897 (VIPVVVLLAIALFIRWKKSRAFGD). The Cytoplasmic portion of the chain corresponds to 898–972 (SERKLEASSG…APPPAPAPSS (75 aa)). The interval 925 to 942 (NFFASRKGYSRKGFDRLS) is interaction with RASSF9. A phosphoserine mark is found at Ser-929 and Ser-942. A disordered region spans residues 937 to 972 (GFDRLSTEGSDQEKDEDASESEEEYSAPPPAPAPSS). At Thr-943 the chain carries Phosphothreonine. Residue Ser-946 is modified to Phosphoserine; by UHMK1. Residues 949–961 (EKDEDASESEEEY) are compositionally biased toward acidic residues. Phosphoserine is present on Ser-957. Over residues 963-972 (APPPAPAPSS) the composition is skewed to pro residues.

This sequence in the C-terminal section; belongs to the peptidyl-alpha-hydroxyglycine alpha-amidating lyase family. In the N-terminal section; belongs to the copper type II ascorbate-dependent monooxygenase family. As to quaternary structure, monomer. Interacts with RASSF9. Requires Zn(2+) as cofactor. Cu(2+) is required as a cofactor.

The protein resides in the cytoplasmic vesicle. The protein localises to the secretory vesicle membrane. The catalysed reaction is a [peptide]-C-terminal glycine + 2 L-ascorbate + O2 = a [peptide]-C-terminal (2S)-2-hydroxyglycine + 2 monodehydro-L-ascorbate radical + H2O. The enzyme catalyses a [peptide]-C-terminal (2S)-2-hydroxyglycine = a [peptide]-C-terminal amide + glyoxylate. It catalyses the reaction N-dodecanoylglycine + 2 L-ascorbate + O2 = N-dodecanoyl-(2S)-hydroxyglycine + 2 monodehydro-L-ascorbate radical + H2O. It carries out the reaction N-dodecanoyl-(2S)-hydroxyglycine = dodecanamide + glyoxylate. The catalysed reaction is N-(9Z,12Z,15Z)-octadecatrienoylglycine + 2 L-ascorbate + O2 = N-(9Z,12Z,15Z)-octadecatrienoyl-(2S)-hydroxyglycine + 2 monodehydro-L-ascorbate radical + H2O. The enzyme catalyses N-(9Z,12Z,15Z)-octadecatrienoyl-(2S)-hydroxyglycine = (9Z,12Z,15Z)-octadecatrienamide + glyoxylate. It catalyses the reaction N-(9Z-octadecenoyl)glycine + 2 L-ascorbate + O2 = N-(9Z-octadecenoyl)-(2S)-hydroxyglycine + 2 monodehydro-L-ascorbate radical + H2O. It carries out the reaction N-(9Z-octadecenoyl)-(2S)-hydroxyglycine = (9Z)-octadecenamide + glyoxylate. The catalysed reaction is N-tetradecanoylglycine + 2 L-ascorbate + O2 = N-tetradecanoyl-(2S)-hydroxyglycine + 2 monodehydro-L-ascorbate radical + H2O. The enzyme catalyses N-tetradecanoyl-(2S)-hydroxyglycine = tetradecamide + glyoxylate. It catalyses the reaction N-decanoylglycine + 2 L-ascorbate + O2 = N-decanoyl-(2S)-hydroxyglycine + 2 monodehydro-L-ascorbate radical + H2O. It carries out the reaction N-decanoyl-(2S)-hydroxyglycine = decanamide + glyoxylate. The catalysed reaction is N-octanoylglycine + 2 L-ascorbate + O2 = N-octanoyl-(2S)-hydroxyglycine + 2 monodehydro-L-ascorbate radical + H2O. The enzyme catalyses N-octanoyl-(2S)-hydroxyglycine = octanamide + glyoxylate. Its activity is regulated as follows. PAM activity is inhibited by EDTA, phenylglyoxal and diethyl pyrocarbonate. PAL activity is stimulated by cadmium and inhibited by mercury. Functionally, bifunctional enzyme that catalyzes amidation of the C-terminus of proteins. Alpha-amidation is present at the C-terminus of many endocrine hormones and neuropeptides and is required for their activity. C-terminal amidation also takes place in response to protein fragmentation triggered by oxidative stress, promoting degradation of amidated protein fragments by the proteasome. Alpha-amidation involves two sequential reactions, both of which are catalyzed by separate catalytic domains of the enzyme. The first step, catalyzed by peptidyl alpha-hydroxylating monooxygenase (PHM) domain, is the copper-, ascorbate-, and O2- dependent stereospecific hydroxylation (with S stereochemistry) at the alpha-carbon (C-alpha) of the C-terminal glycine of the peptidylglycine substrate. The second step, catalyzed by the peptidylglycine amidoglycolate lyase (PAL) domain, is the zinc-dependent cleavage of the N-C-alpha bond, producing the alpha-amidated peptide and glyoxylate. Similarly, catalyzes the two-step conversion of an N-fatty acylglycine to a primary fatty acid amide and glyoxylate. The polypeptide is Peptidyl-glycine alpha-amidating monooxygenase (PAM) (Bos taurus (Bovine)).